Consider the following 158-residue polypeptide: MGHFTFIGLCLLAMFLSLSGAECYTCPIDWLPKNGLCYKVFSKHKTWFDAEMYCRKFKPGCHLASLHSNADAVEFSEYISDYLTGQGHVWIGLRDTKKKYIWEWTDRSRTDFLPWRKKQPDHFNNNEFCVEIVNFTGYLQWNDDNCAALRPFLCQCKY.

Residues 1 to 21 form the signal peptide; sequence MGHFTFIGLCLLAMFLSLSGA. Disulfide bonds link C26–C37, C54–C154, C61–C156, and C129–C146. In terms of domain architecture, C-type lectin spans 33–155; that stretch reads KNGLCYKVFS…CAALRPFLCQ (123 aa). Residues Q119, D121, and E127 each coordinate Ca(2+). The short motif at 119–121 is the Galactose-binding element; sequence QPD. N-linked (GlcNAc...) asparagine glycosylation occurs at N134. The Ca(2+) site is built by N142 and D143.

Belongs to the true venom lectin family. As to quaternary structure, homodimer; non-covalently linked. In terms of tissue distribution, expressed by the venom gland.

It localises to the secreted. Functionally, galactose-binding lectin which recognizes specific carbohydrate structures and agglutinates a variety of animal cells by binding to cell-surface glycoproteins and glycolipids. May be a calcium-dependent lectin. This Bungarus fasciatus (Banded krait) protein is C-type lectin BfL-1.